A 396-amino-acid chain; its full sequence is Elongation factor Tu (396 aa).

Residues 10-205 (KPHVNIGTIG…ACDDNIPDPV (196 aa)) form the tr-type G domain. Residues 19–26 (GHVDHGKT) form a G1 region. Residue 19 to 26 (GHVDHGKT) participates in GTP binding. Thr-26 is a Mg(2+) binding site. Residues 62-66 (GITIN) are G2. The tract at residues 83 to 86 (DAPG) is G3. Residues 83–87 (DAPGH) and 138–141 (NKCD) each bind GTP. Residues 138 to 141 (NKCD) are G4. The G5 stretch occupies residues 175 to 177 (SAL).

The protein belongs to the TRAFAC class translation factor GTPase superfamily. Classic translation factor GTPase family. EF-Tu/EF-1A subfamily. Monomer.

It is found in the cytoplasm. It catalyses the reaction GTP + H2O = GDP + phosphate + H(+). In terms of biological role, GTP hydrolase that promotes the GTP-dependent binding of aminoacyl-tRNA to the A-site of ribosomes during protein biosynthesis. The chain is Elongation factor Tu from Corynebacterium glutamicum (strain ATCC 13032 / DSM 20300 / JCM 1318 / BCRC 11384 / CCUG 27702 / LMG 3730 / NBRC 12168 / NCIMB 10025 / NRRL B-2784 / 534).